Reading from the N-terminus, the 590-residue chain is Probable lysine-specific demethylase 4B (590 aa).

Residues 9–51 enclose the JmjN domain; that stretch reads IKVFRPTWEEFKDFPKYVAYMESQGAHKAGLAKVVPPPEWVPR. Tyrosine 130 contacts 2-oxoglutarate. One can recognise a JmjC domain in the interval 140–306; sequence DTDQDSWNIN…YGKRAVQCTC (167 aa). 2 residues coordinate Fe cation: histidine 186 and glutamate 188. 2-oxoglutarate contacts are provided by asparagine 196 and lysine 204. Cysteine 232 and histidine 238 together coordinate Zn(2+). Lysine 239 is a 2-oxoglutarate binding site. Residue histidine 274 coordinates Fe cation. Zn(2+) is bound by residues cysteine 304 and cysteine 306. 2 disordered regions span residues 372 to 395 and 417 to 590; these read PTKAKSFKERNPDLDLDEIQQNPN and ATDE…TASP. A compositionally biased stretch (acidic residues) spans 445 to 458; that stretch reads EYIDDGTEDDDEEE. The segment covering 480 to 494 has biased composition (basic residues); that stretch reads SKRKTNSRNNRGRSP. 2 stretches are compositionally biased toward low complexity: residues 502 to 513 and 537 to 571; these read ISPASSTSSTSR and TTSPAVSSAATAVKTPTSAVVAGTTSIATTTTPPA.

The protein belongs to the JHDM3 histone demethylase family. Fe(2+) is required as a cofactor.

It localises to the nucleus. The enzyme catalyses N(6),N(6),N(6)-trimethyl-L-lysyl(9)-[histone H3] + 2 2-oxoglutarate + 2 O2 = N(6)-methyl-L-lysyl(9)-[histone H3] + 2 formaldehyde + 2 succinate + 2 CO2. Its function is as follows. Probable histone demethylase that specifically demethylates 'Lys-9' and 'Lys-36' residues of histone H3, thereby playing a central role in histone code. Demethylation of Lys residue generates formaldehyde and succinate. The polypeptide is Probable lysine-specific demethylase 4B (Kdm4B) (Drosophila melanogaster (Fruit fly)).